Consider the following 77-residue polypeptide: Acyl carrier protein (77 aa).

Residues 3-77 (QEIFEKVKKI…GKAVEHIESK (75 aa)) form the Carrier domain. Serine 38 is modified (O-(pantetheine 4'-phosphoryl)serine).

It belongs to the acyl carrier protein (ACP) family. Post-translationally, 4'-phosphopantetheine is transferred from CoA to a specific serine of apo-ACP by AcpS. This modification is essential for activity because fatty acids are bound in thioester linkage to the sulfhydryl of the prosthetic group.

Its subcellular location is the cytoplasm. It functions in the pathway lipid metabolism; fatty acid biosynthesis. Its function is as follows. Carrier of the growing fatty acid chain in fatty acid biosynthesis. The polypeptide is Acyl carrier protein (Synechocystis sp. (strain ATCC 27184 / PCC 6803 / Kazusa)).